A 430-amino-acid polypeptide reads, in one-letter code: Putative golgin subfamily A member 8D (430 aa).

The stretch at 2 to 217 (EWKLEQSMRE…LTAQLSLMAL (216 aa)) forms a coiled coil. Disordered regions lie at residues 138-158 (LREQ…QEER), 217-239 (LPGE…RPMP), 290-331 (PITK…GVAA), and 382-406 (PVQG…QDHQ). The span at 222–235 (HGGEHLDSEGEEAP) shows a compositional bias: basic and acidic residues. Residues 303-316 (PGGGHHQAGPGQGG) show a composition bias toward gly residues.

It belongs to the GOLGA8 family.

This is Putative golgin subfamily A member 8D (GOLGA8DP) from Homo sapiens (Human).